We begin with the raw amino-acid sequence, 360 residues long: Mannose-1-phosphate guanylyltransferase catalytic subunit beta (360 aa).

The segment at 2-222 (KALILVGGYG…QGFWMDIGQP (221 aa)) is substrate-binding domain. Aspartate 110 lines the GDP-alpha-D-mannose pocket. Mg(2+) is bound at residue aspartate 110. Residue lysine 162 is part of the active site. Aspartate 218 provides a ligand contact to GDP-alpha-D-mannose. Aspartate 218 lines the Mg(2+) pocket. The hexapeptide repeat domain stretch occupies residues 245 to 360 (CSGPGIVGNV…ESVPEPRIIM (116 aa)).

This sequence belongs to the transferase hexapeptide repeat family. As to quaternary structure, component of the GMPPA-GMPPB mannose-1-phosphate guanylyltransferase complex composed of 4 GMPPA subunits and 8 GMPPB subunits; the complex is organized into three layers, a central layer made up of 2 GMPPA dimers sandwiched between two layers each made up of 2 GMPPB dimers. GMPPB catalytic activity is reduced when part of the complex and binding of GDP-alpha-D-Mannose by GMPPA induces allosteric feedback inhibition of GMPPB. It depends on Mg(2+) as a cofactor. In terms of tissue distribution, ubiquitously expressed, including in brain and skeletal muscle. Weakly expressed with highest expression in skeletal muscle, brain and gonads.

Its subcellular location is the cytoplasm. The catalysed reaction is alpha-D-mannose 1-phosphate + GTP + H(+) = GDP-alpha-D-mannose + diphosphate. It functions in the pathway nucleotide-sugar biosynthesis; GDP-alpha-D-mannose biosynthesis; GDP-alpha-D-mannose from alpha-D-mannose 1-phosphate (GTP route): step 1/1. With respect to regulation, enzyme activity is reduced by incorporation into the GMPPA-GMPPB mannose-1-phosphate guanylyltransferase complex. Allosterically inhibited, when part of the GMPPA-GMPPB complex, by GDP-alpha-D-mannose binding to GMPPA. Catalytic subunit of the GMPPA-GMPPB mannose-1-phosphate guanylyltransferase complex. Catalyzes the formation of GDP-mannose, an essential precursor of glycan moieties of glycoproteins and glycolipids. Can catalyze the reverse reaction in vitro. Together with GMPPA regulates GDP-alpha-D-mannose levels. The chain is Mannose-1-phosphate guanylyltransferase catalytic subunit beta from Homo sapiens (Human).